A 355-amino-acid chain; its full sequence is Phosphoribosylformylglycinamidine cyclo-ligase (355 aa).

The protein belongs to the AIR synthase family.

The protein resides in the cytoplasm. The enzyme catalyses 2-formamido-N(1)-(5-O-phospho-beta-D-ribosyl)acetamidine + ATP = 5-amino-1-(5-phospho-beta-D-ribosyl)imidazole + ADP + phosphate + H(+). Its pathway is purine metabolism; IMP biosynthesis via de novo pathway; 5-amino-1-(5-phospho-D-ribosyl)imidazole from N(2)-formyl-N(1)-(5-phospho-D-ribosyl)glycinamide: step 2/2. In Paraburkholderia phytofirmans (strain DSM 17436 / LMG 22146 / PsJN) (Burkholderia phytofirmans), this protein is Phosphoribosylformylglycinamidine cyclo-ligase.